Consider the following 132-residue polypeptide: Intraflagellar transport protein 20 homolog (132 aa).

The interval 70–132 (MKAIGARNLL…EFIDQFIFQK (63 aa)) is IFT57-binding. Residues 74–114 (GARNLLKSIAKQREAQQQQLQALIAEKKMQLERYRVEYEAL) adopt a coiled-coil conformation.

In terms of assembly, component of the IFT complex B, at least composed of IFT20, IFT22, IFT25, IFT27, IFT46, IFT52, TRAF3IP1/IFT54, IFT57, IFT74, IFT80, IFT81, and IFT88. Interacts directly with IFT57 and KIF3B/Kinesin II subunit. Interacts with IFT88. Interacts with CEP83. Interacts with SPEF2 (via C-terminus). Interacts with CBL and CBLB. Interacts with TRIP11. Interacts with TTC21A. Interacts with SPATA1. Interacts with USH1G. Interacts with CCDC146. Interacts with CEP78; regulating IFT20 stability and localization. In terms of tissue distribution, expressed in almost all tissues.

Its subcellular location is the golgi apparatus. The protein resides in the cis-Golgi network. The protein localises to the cytoplasm. It localises to the cytoskeleton. It is found in the microtubule organizing center. Its subcellular location is the centrosome. The protein resides in the centriole. The protein localises to the cilium basal body. It localises to the cell projection. It is found in the cilium. Its subcellular location is the cytoplasmic vesicle. The protein resides in the secretory vesicle. The protein localises to the acrosome. Part of intraflagellar transport (IFT) particles involved in ciliary process assembly. May play a role in the trafficking of ciliary membrane proteins from the Golgi complex to the cilium. Regulates the platelet-derived growth factor receptor-alpha (PDGFRA) signaling pathway. Required for protein stability of E3 ubiquitin ligases CBL and CBLB that mediate ubiquitination and internalization of PDGFRA for proper feedback inhibition of PDGFRA signaling. Essential for male fertility. Plays an important role in spermatogenesis, particularly spermiogenesis, when germ cells form flagella. May play a role in the transport of flagellar proteins ODF2 and SPAG16 to build sperm flagella and in the removal of redundant sperm cytoplasm. Also involved in autophagy since it is required for trafficking of ATG16L and the expansion of the autophagic compartment. This chain is Intraflagellar transport protein 20 homolog (IFT20), found in Homo sapiens (Human).